The sequence spans 123 residues: Ribosome-binding factor A (123 aa).

This sequence belongs to the RbfA family. Monomer. Binds 30S ribosomal subunits, but not 50S ribosomal subunits or 70S ribosomes.

The protein localises to the cytoplasm. Its function is as follows. One of several proteins that assist in the late maturation steps of the functional core of the 30S ribosomal subunit. Associates with free 30S ribosomal subunits (but not with 30S subunits that are part of 70S ribosomes or polysomes). Required for efficient processing of 16S rRNA. May interact with the 5'-terminal helix region of 16S rRNA. The polypeptide is Ribosome-binding factor A (Desulfatibacillum aliphaticivorans).